We begin with the raw amino-acid sequence, 321 residues long: Lipoyl synthase (321 aa).

Residues C68, C73, C79, C94, C98, C101, and S308 each coordinate [4Fe-4S] cluster. One can recognise a Radical SAM core domain in the interval 80–297 (FNHGTATFMI…KAEALAMGFT (218 aa)).

Belongs to the radical SAM superfamily. Lipoyl synthase family. The cofactor is [4Fe-4S] cluster.

The protein localises to the cytoplasm. It catalyses the reaction [[Fe-S] cluster scaffold protein carrying a second [4Fe-4S](2+) cluster] + N(6)-octanoyl-L-lysyl-[protein] + 2 oxidized [2Fe-2S]-[ferredoxin] + 2 S-adenosyl-L-methionine + 4 H(+) = [[Fe-S] cluster scaffold protein] + N(6)-[(R)-dihydrolipoyl]-L-lysyl-[protein] + 4 Fe(3+) + 2 hydrogen sulfide + 2 5'-deoxyadenosine + 2 L-methionine + 2 reduced [2Fe-2S]-[ferredoxin]. The protein operates within protein modification; protein lipoylation via endogenous pathway; protein N(6)-(lipoyl)lysine from octanoyl-[acyl-carrier-protein]: step 2/2. Its function is as follows. Catalyzes the radical-mediated insertion of two sulfur atoms into the C-6 and C-8 positions of the octanoyl moiety bound to the lipoyl domains of lipoate-dependent enzymes, thereby converting the octanoylated domains into lipoylated derivatives. The polypeptide is Lipoyl synthase (Salmonella paratyphi A (strain AKU_12601)).